We begin with the raw amino-acid sequence, 267 residues long: tRNA pseudouridine synthase A (267 aa).

The active-site Nucleophile is the D53. Y111 contributes to the substrate binding site.

The protein belongs to the tRNA pseudouridine synthase TruA family. Homodimer.

The catalysed reaction is uridine(38/39/40) in tRNA = pseudouridine(38/39/40) in tRNA. Its function is as follows. Formation of pseudouridine at positions 38, 39 and 40 in the anticodon stem and loop of transfer RNAs. This chain is tRNA pseudouridine synthase A, found in Alcanivorax borkumensis (strain ATCC 700651 / DSM 11573 / NCIMB 13689 / SK2).